The following is a 280-amino-acid chain: Acetylglutamate kinase (280 aa).

Substrate-binding positions include 64–65 (GG), arginine 86, and asparagine 177.

It belongs to the acetylglutamate kinase family. ArgB subfamily.

Its subcellular location is the cytoplasm. It catalyses the reaction N-acetyl-L-glutamate + ATP = N-acetyl-L-glutamyl 5-phosphate + ADP. The protein operates within amino-acid biosynthesis; L-arginine biosynthesis; N(2)-acetyl-L-ornithine from L-glutamate: step 2/4. Functionally, catalyzes the ATP-dependent phosphorylation of N-acetyl-L-glutamate. The polypeptide is Acetylglutamate kinase (Nautilia profundicola (strain ATCC BAA-1463 / DSM 18972 / AmH)).